The following is a 277-amino-acid chain: Large ribosomal subunit protein uL2 (277 aa).

Disordered stretches follow at residues 36-58 (PLHK…GGGH) and 219-277 (TVRG…RKNK). A compositionally biased stretch (basic residues) spans 258-277 (KTRKKKNKSDKFIVRRRKNK).

The protein belongs to the universal ribosomal protein uL2 family. As to quaternary structure, part of the 50S ribosomal subunit. Forms a bridge to the 30S subunit in the 70S ribosome.

In terms of biological role, one of the primary rRNA binding proteins. Required for association of the 30S and 50S subunits to form the 70S ribosome, for tRNA binding and peptide bond formation. It has been suggested to have peptidyltransferase activity; this is somewhat controversial. Makes several contacts with the 16S rRNA in the 70S ribosome. In Bacillus velezensis (strain DSM 23117 / BGSC 10A6 / LMG 26770 / FZB42) (Bacillus amyloliquefaciens subsp. plantarum), this protein is Large ribosomal subunit protein uL2.